Consider the following 429-residue polypeptide: Enolase (429 aa).

Glutamine 163 provides a ligand contact to (2R)-2-phosphoglycerate. Glutamate 205 (proton donor) is an active-site residue. Mg(2+)-binding residues include aspartate 242, glutamate 286, and aspartate 313. The (2R)-2-phosphoglycerate site is built by lysine 338, arginine 367, serine 368, and lysine 389. Lysine 338 functions as the Proton acceptor in the catalytic mechanism.

Belongs to the enolase family. The cofactor is Mg(2+).

The protein localises to the cytoplasm. It is found in the secreted. It localises to the cell surface. The enzyme catalyses (2R)-2-phosphoglycerate = phosphoenolpyruvate + H2O. It functions in the pathway carbohydrate degradation; glycolysis; pyruvate from D-glyceraldehyde 3-phosphate: step 4/5. In terms of biological role, catalyzes the reversible conversion of 2-phosphoglycerate (2-PG) into phosphoenolpyruvate (PEP). It is essential for the degradation of carbohydrates via glycolysis. The sequence is that of Enolase from Thermoanaerobacter pseudethanolicus (strain ATCC 33223 / 39E) (Clostridium thermohydrosulfuricum).